The primary structure comprises 153 residues: SsrA-binding protein (153 aa).

The protein belongs to the SmpB family.

It localises to the cytoplasm. Required for rescue of stalled ribosomes mediated by trans-translation. Binds to transfer-messenger RNA (tmRNA), required for stable association of tmRNA with ribosomes. tmRNA and SmpB together mimic tRNA shape, replacing the anticodon stem-loop with SmpB. tmRNA is encoded by the ssrA gene; the 2 termini fold to resemble tRNA(Ala) and it encodes a 'tag peptide', a short internal open reading frame. During trans-translation Ala-aminoacylated tmRNA acts like a tRNA, entering the A-site of stalled ribosomes, displacing the stalled mRNA. The ribosome then switches to translate the ORF on the tmRNA; the nascent peptide is terminated with the 'tag peptide' encoded by the tmRNA and targeted for degradation. The ribosome is freed to recommence translation, which seems to be the essential function of trans-translation. This is SsrA-binding protein from Cytophaga hutchinsonii (strain ATCC 33406 / DSM 1761 / CIP 103989 / NBRC 15051 / NCIMB 9469 / D465).